A 211-amino-acid chain; its full sequence is Glycerol-3-phosphate acyltransferase (211 aa).

4 helical membrane passes run 5–25, 80–100, 112–132, and 138–158; these read ALGM…ILFC, PLYL…PVFF, FGAI…TWLL, and GYSS…VWWF.

The protein belongs to the PlsY family. In terms of assembly, probably interacts with PlsX.

The protein resides in the cell inner membrane. It carries out the reaction an acyl phosphate + sn-glycerol 3-phosphate = a 1-acyl-sn-glycero-3-phosphate + phosphate. Its pathway is lipid metabolism; phospholipid metabolism. Its function is as follows. Catalyzes the transfer of an acyl group from acyl-phosphate (acyl-PO(4)) to glycerol-3-phosphate (G3P) to form lysophosphatidic acid (LPA). This enzyme utilizes acyl-phosphate as fatty acyl donor, but not acyl-CoA or acyl-ACP. The sequence is that of Glycerol-3-phosphate acyltransferase from Pectobacterium carotovorum subsp. carotovorum (strain PC1).